The following is a 261-amino-acid chain: Neurexophilin-2 (261 aa).

Positions 1-22 (MSLRPLPLLVVPGLLQLLFCDS) are cleaved as a signal peptide. The II stretch occupies residues 23–87 (EEVIHNTESV…WDWLANITEI (65 aa)). N-linked (GlcNAc...) asparagine glycosylation is found at Asn-83, Asn-136, Asn-146, and Asn-152. Residues 88-166 (QEQLARTKRR…LVPPSKVVEF (79 aa)) form an III region. Residues 167–175 (EISPQSTLE) form an IV (linker domain) region. Positions 176 to 261 (TKESKSFNCH…HSETPYLSFG (86 aa)) are v (Cys-rich).

The protein belongs to the neurexophilin family. May be proteolytically processed at the boundary between the N-terminal non-conserved and the central conserved domain in neuron-like cells.

It localises to the secreted. In terms of biological role, may be signaling molecules that resemble neuropeptides and that act by binding to alpha-neurexins and possibly other receptors. In Mus musculus (Mouse), this protein is Neurexophilin-2 (Nxph2).